Reading from the N-terminus, the 264-residue chain is 3-methyl-2-oxobutanoate hydroxymethyltransferase (264 aa).

Asp-45 and Asp-84 together coordinate Mg(2+). Residues 45–46 (DS), Asp-84, and Lys-112 each bind 3-methyl-2-oxobutanoate. Glu-114 is a binding site for Mg(2+). Residue Glu-181 is the Proton acceptor of the active site.

The protein belongs to the PanB family. As to quaternary structure, homodecamer; pentamer of dimers. It depends on Mg(2+) as a cofactor.

The protein localises to the cytoplasm. It catalyses the reaction 3-methyl-2-oxobutanoate + (6R)-5,10-methylene-5,6,7,8-tetrahydrofolate + H2O = 2-dehydropantoate + (6S)-5,6,7,8-tetrahydrofolate. Its pathway is cofactor biosynthesis; (R)-pantothenate biosynthesis; (R)-pantoate from 3-methyl-2-oxobutanoate: step 1/2. Its function is as follows. Catalyzes the reversible reaction in which hydroxymethyl group from 5,10-methylenetetrahydrofolate is transferred onto alpha-ketoisovalerate to form ketopantoate. The protein is 3-methyl-2-oxobutanoate hydroxymethyltransferase of Escherichia coli O7:K1 (strain IAI39 / ExPEC).